The primary structure comprises 214 residues: Osteoclast-stimulating factor 1 (214 aa).

Residue serine 2 is modified to N-acetylserine. One can recognise an SH3 domain in the interval 12–71; sequence GQVKVFRALYTFEPRTPDELYFEEGDIIYITDMSDTSWWKGTCKGRTGLIPSNYVAEQAE. ANK repeat units lie at residues 72 to 101, 105 to 135, and 139 to 168; these read SIDN…GVNG, AGST…ELNQ, and LGDT…RTDL. Threonine 200 carries the post-translational modification Phosphothreonine. Residues serine 202 and serine 213 each carry the phosphoserine modification.

Interacts with SRC and SMN1. Interacts with FASLG.

The protein localises to the cytoplasm. Induces bone resorption, acting probably through a signaling cascade which results in the secretion of factor(s) enhancing osteoclast formation and activity. The sequence is that of Osteoclast-stimulating factor 1 (Ostf1) from Rattus norvegicus (Rat).